The sequence spans 372 residues: Proline-rich P65 protein homolog (372 aa).

The segment covering 1-37 (MEKNRSAFQQNQQASNQPFNQDQNQYYQDPNQQQFNQ) has biased composition (low complexity). Positions 1 to 100 (MEKNRSAFQQ…GFDPNQQYYQ (100 aa)) are disordered. A run of 13 repeats spans residues 29–40 (DPNQQQFNQSGF), 41–52 (DPNQQQFNQPGF), 53–60 (DPNQQYYQ), 61–72 (DPNQQQFNQAGF), 73–80 (DQNQQYYQ), 81–92 (DPNQQQFNQPGF), 93–100 (DPNQQYYQ), 101–112 (DPNQQQFNQAGF), 113–119 (DQNQYYQ), 120–131 (DPNQQQFNQSGF), 132–138 (DQNQYYQ), 139–150 (DPNQQQFNQPSF), and 151–162 (DLNNQQFNQPGF). A compositionally biased stretch (polar residues) spans 38-49 (SGFDPNQQQFNQ). Residues 53–100 (DPNQQYYQDPNQQQFNQAGFDQNQQYYQDPNQQQFNQPGFDPNQQYYQ) show a composition bias toward low complexity. The interval 122 to 150 (NQQQFNQSGFDQNQYYQDPNQQQFNQPSF) is disordered.

The chain is Proline-rich P65 protein homolog from Mycoplasma genitalium (strain ATCC 33530 / DSM 19775 / NCTC 10195 / G37) (Mycoplasmoides genitalium).